The primary structure comprises 98 residues: MKVYDVGRICVKTSGREAGLKCVIVDIIDDNFVLVTGPKSVSGVKRRRANIRHLEPLEYKISISKGASDEEVKAALEKAGLIEFMKEKVKPTVSTTFV.

Belongs to the eukaryotic ribosomal protein eL14 family.

This chain is Large ribosomal subunit protein eL14, found in Thermofilum pendens (strain DSM 2475 / Hrk 5).